Reading from the N-terminus, the 497-residue chain is Basic immunoglobulin-like variable motif-containing protein (497 aa).

Disordered stretches follow at residues 1-24 (MPNI…KSQP), 150-173 (TSKL…KAKP), 426-462 (GTLR…GRSF), and 478-497 (IRER…EGND). Positions 152–169 (KLKRSGVKKQTPKKKPDR) are enriched in basic residues. The segment covering 442–451 (PKSESEDNVS) has biased composition (basic and acidic residues).

Belongs to the BIVM family.

The protein localises to the cytoplasm. It is found in the nucleus. This chain is Basic immunoglobulin-like variable motif-containing protein (bivm), found in Xenopus laevis (African clawed frog).